We begin with the raw amino-acid sequence, 806 residues long: MYVLNRKGEEEDISFDQILKRIQRLSYGLHELVDPARVTQGVINGMYSGIKTCELDELAAQTCAYMATTHPDFSILAARITTDNLHKNTSDDVAEVAEALYTYKDVRGRPASLISKEVYDFILLHKDRLNKEIDYTRDFNYDYFGFKTLERSYLLRINNKIIERPQHLLMRVSIGIHIDDIDKALETYHLMSQKYFTHATPTLFNSGTPRPQMSSCFLLSMKADSIEGIFETLKQCALISKTAGGIGVAVQDIRGQNSYIRGTNGISNGLVPMLRVFNDTARYVDQGGGKRKGSFAVYIEPWHSDIFEFLDLRKNHGKEELRARDLFYAVWVPDLFMKRVKENKNWTLMCPNECPGLSETWGEEFEKLYTKYEEENMGKKTVLAQDLWFAILQSQIETGVPYMLYKDSCNAKSNQKNLGTIKCSNLCCEIIEYTSPDEVAVCNLASIALCKFVDLEKKEFNFKKLYEITKIITRNLDKIIERNYYPVKEAKTSNTRHRPIGIGVQGLADTFMLLRYPYESDAAKELNKRIFETMYYAALEMSVELASIHGPYESYQGSPASQGILQFDMWNAKVDNKYWDWDELKAKIRKHGLRNSLLLAPMPTASTSQILGNNESFEPYTSNIYYRRVLSGEFFVVNPHLLKDLFDRGLWDEDMKQQLIAHNGSIQYISEIPDDLKELYKTVWEIKQKNIIDMAADRGIFIDQSQSLNIYIQKPTFAKLSSMHFYGWEKGLKTGAYYLRTQAATDAIKFTVDTHVAKNAVKLKNADGVQITREVSRETISTESTVTQNVCPLRRNNDEQCLMCSG.

Residues 1 to 91 (MYVLNRKGEE…TDNLHKNTSD (91 aa)) enclose the ATP-cone domain. ATP contacts are provided by residues 5–6 (NR), 11–17 (EDISFDQ), Thr-52, and Asp-56. Ser-215 is a GDP binding site. Cys-216 and Cys-442 form a disulfide bridge. Residues 224–226 (DSI), Lys-241, Arg-254, and 261–262 (RG) each bind dTTP. Asn-425 provides a ligand contact to GDP. Residue Asn-425 is the Proton acceptor of the active site. Cys-427 serves as the catalytic Cysteine radical intermediate. GDP contacts are provided by residues Glu-429 and 604 to 607 (TAST). Glu-429 acts as the Proton acceptor in catalysis.

The protein belongs to the ribonucleoside diphosphate reductase large chain family. Heterodimer of a large and a small subunit.

The catalysed reaction is a 2'-deoxyribonucleoside 5'-diphosphate + [thioredoxin]-disulfide + H2O = a ribonucleoside 5'-diphosphate + [thioredoxin]-dithiol. Its activity is regulated as follows. Under complex allosteric control mediated by deoxynucleoside triphosphates and ATP binding to separate specificity and activation sites on the large subunit. The type of nucleotide bound at the specificity site determines substrate preference. It seems probable that ATP makes the enzyme reduce CDP and UDP, dGTP favors ADP reduction and dTTP favors GDP reduction. Stimulated by ATP and inhibited by dATP binding to the activity site. Provides the precursors necessary for DNA synthesis. Catalyzes the biosynthesis of deoxyribonucleotides from the corresponding ribonucleotides. The chain is Ribonucleoside-diphosphate reductase large subunit (RNR1) from Plasmodium falciparum (isolate Dd2).